A 218-amino-acid polypeptide reads, in one-letter code: ATP phosphoribosyltransferase (218 aa).

It belongs to the ATP phosphoribosyltransferase family. Short subfamily. As to quaternary structure, heteromultimer composed of HisG and HisZ subunits.

Its subcellular location is the cytoplasm. The enzyme catalyses 1-(5-phospho-beta-D-ribosyl)-ATP + diphosphate = 5-phospho-alpha-D-ribose 1-diphosphate + ATP. Its pathway is amino-acid biosynthesis; L-histidine biosynthesis; L-histidine from 5-phospho-alpha-D-ribose 1-diphosphate: step 1/9. Catalyzes the condensation of ATP and 5-phosphoribose 1-diphosphate to form N'-(5'-phosphoribosyl)-ATP (PR-ATP). Has a crucial role in the pathway because the rate of histidine biosynthesis seems to be controlled primarily by regulation of HisG enzymatic activity. This is ATP phosphoribosyltransferase from Synechococcus elongatus (strain ATCC 33912 / PCC 7942 / FACHB-805) (Anacystis nidulans R2).